The sequence spans 105 residues: N(4)-acetylcytidine amidohydrolase (105 aa).

The region spanning 7–93 is the ASCH domain; the sequence is TFFERFEHDI…VIAEIYPGLE (87 aa). Lys21 (proton acceptor) is an active-site residue. Thr24 functions as the Nucleophile in the catalytic mechanism. Catalysis depends on Glu74, which acts as the Proton donor.

The protein belongs to the N(4)-acetylcytidine amidohydrolase family.

It carries out the reaction N(4)-acetylcytidine + H2O = cytidine + acetate + H(+). The catalysed reaction is N(4)-acetyl-2'-deoxycytidine + H2O = 2'-deoxycytidine + acetate + H(+). It catalyses the reaction N(4)-acetylcytosine + H2O = cytosine + acetate + H(+). Functionally, catalyzes the hydrolysis of N(4)-acetylcytidine (ac4C). The sequence is that of N(4)-acetylcytidine amidohydrolase from Shewanella baltica (strain OS195).